The chain runs to 370 residues: 2-aminoethylphosphonate--pyruvate transaminase 2 (370 aa).

At K194 the chain carries N6-(pyridoxal phosphate)lysine.

Belongs to the class-V pyridoxal-phosphate-dependent aminotransferase family. PhnW subfamily. As to quaternary structure, homodimer. Pyridoxal 5'-phosphate serves as cofactor.

It carries out the reaction (2-aminoethyl)phosphonate + pyruvate = phosphonoacetaldehyde + L-alanine. Its function is as follows. Involved in phosphonate degradation. The chain is 2-aminoethylphosphonate--pyruvate transaminase 2 from Paraburkholderia xenovorans (strain LB400).